The chain runs to 1399 residues: DNA-directed RNA polymerase subunit beta' (1399 aa).

The Zn(2+) site is built by C70, C72, C85, and C88. The Mg(2+) site is built by D460, D462, and D464. The Zn(2+) site is built by C814, C888, C895, and C898.

It belongs to the RNA polymerase beta' chain family. The RNAP catalytic core consists of 2 alpha, 1 beta, 1 beta' and 1 omega subunit. When a sigma factor is associated with the core the holoenzyme is formed, which can initiate transcription. Mg(2+) is required as a cofactor. Requires Zn(2+) as cofactor.

The catalysed reaction is RNA(n) + a ribonucleoside 5'-triphosphate = RNA(n+1) + diphosphate. Functionally, DNA-dependent RNA polymerase catalyzes the transcription of DNA into RNA using the four ribonucleoside triphosphates as substrates. The protein is DNA-directed RNA polymerase subunit beta' of Pseudomonas putida (strain ATCC 47054 / DSM 6125 / CFBP 8728 / NCIMB 11950 / KT2440).